Reading from the N-terminus, the 479-residue chain is Poly(A) polymerase catalytic subunit (479 aa).

Residues Asp-202 and Asp-204 contribute to the active site. Residues Asp-202, Asp-204, and Asp-253 each contribute to the Ca(2+) site.

Belongs to the poxviridae poly(A) polymerase catalytic subunit family. Heterodimer of a large (catalytic) subunit and a small (regulatory) subunit.

It carries out the reaction RNA(n) + ATP = RNA(n)-3'-adenine ribonucleotide + diphosphate. Polymerase that creates the 3'-poly(A) tail of mRNA's. This Homo sapiens (Human) protein is Poly(A) polymerase catalytic subunit (OPG063).